Here is a 4318-residue protein sequence, read N- to C-terminus: Cytoplasmic dynein 2 heavy chain 1 (4318 aa).

The stem stretch occupies residues 1 to 1658 (MPAEDARKEY…IMRMVDAEFQ (1658 aa)). Residue 147–154 (LKSLVRKQ) coordinates ATP. 2 coiled-coil regions span residues 1328–1354 (DKAT…QRKW) and 1402–1431 (LRTT…RSIL). AAA regions lie at residues 1659-1883 (YTYE…VLRG), 1951-2171 (DAIR…RQGD), 2261-2515 (ASDF…WVLG), and 2623-2871 (TFAR…SSSV). Residue 1697 to 1704 (GPAGTGKT) participates in ATP binding. A coiled-coil region spans residues 1959-1986 (EHNLVVMETQVKKALELYEQLRQRMGVV). ATP contacts are provided by residues 1989 to 1996 (GPSGSGKS), 2301 to 2308 (GPDGCGKG), and 2661 to 2668 (GRSGVGRR). A stalk region spans residues 2888 to 3176 (DVYRRKKQGV…YELEKEQETI (289 aa)). Coiled coils occupy residues 2908-2989 (VAKL…AEIE) and 3423-3480 (QHEK…KTKE). AAA stretches follow at residues 3251-3487 (LSTE…TITQ) and 3699-3914 (MTFF…IIDR).

The protein belongs to the dynein heavy chain family. The cytoplasmic dynein complex 2 is probably composed by a heavy chain DYH1B homodimer and a number of light intermediate chains.

It is found in the cytoplasm. The protein resides in the cytoskeleton. The protein localises to the cilium axoneme. It localises to the cell membrane. In terms of biological role, may function as a motor for intraflagellar retrograde transport. Functions in cilia biogenesis. The protein is Cytoplasmic dynein 2 heavy chain 1 (DYH1B) of Tripneustes gratilla (Hawaian sea urchin).